A 76-amino-acid polypeptide reads, in one-letter code: MLGRLIKDTTQFVKSSTKFGIVWGPKLAPWGITLGLGAFYFFQPKFLFKPLPIIGSNYLTQKDLDKMKKEAAENSQ.

A helical membrane pass occupies residues 20-42; that stretch reads GIVWGPKLAPWGITLGLGAFYFF.

It localises to the membrane. This is an uncharacterized protein from Dictyostelium discoideum (Social amoeba).